The primary structure comprises 149 residues: Calmodulin-1 (149 aa).

EF-hand domains lie at 8-43 (EQISEFKEAFSLFDKDGDGCITTKELGTVMRSLGQN), 44-79 (PTEAELQDMINEVDADGNGTIDFPEFLNLMAKKMKD), 81-116 (DSEEELKEAFRVFDKDQNGFISAAELRHVMTNLGEK), and 117-149 (LTDEEVEEMIREADVDGDGQINYEEFVKIMMAK). Ca(2+) contacts are provided by Asp-21, Asp-23, Asp-25, Cys-27, Glu-32, Asp-57, Asp-59, Asn-61, Thr-63, Glu-68, Asp-94, Asp-96, Asn-98, Glu-105, Asp-130, Asp-132, Asp-134, Gln-136, and Glu-141.

This sequence belongs to the calmodulin family. In terms of assembly, interacts with ZAR1 (via CaMBD domain). Binds to IQD1. Binds to MEE62 in a calcium-dependent manner.

The protein resides in the cytoplasm. Its subcellular location is the cell membrane. Its function is as follows. Calmodulin mediates the control of a large number of enzymes, ion channels and other proteins by Ca(2+). Among the enzymes to be stimulated by the calmodulin-Ca(2+) complex are a number of protein kinases and phosphatases. The polypeptide is Calmodulin-1 (CAM1) (Arabidopsis thaliana (Mouse-ear cress)).